Reading from the N-terminus, the 430-residue chain is Pre-B-cell leukemia transcription factor 2 (430 aa).

A disordered region spans residues 1-52; the sequence is MDERLLGPPPPGGGRGGLGLVGAEPGGPGEPPGGGDPGGGSGGVPGGRGKQD. The span at 13 to 48 shows a compositional bias: gly residues; that stretch reads GGRGGLGLVGAEPGGPGEPPGGGDPGGGSGGVPGGR. The 196-residue stretch at 48–243 folds into the PBC domain; sequence RGKQDIGDIL…VMILRSRFLD (196 aa). Positions 55–134 are PBC-A; sequence DILQQIMTIT…EGVAGPEKGG (80 aa). 3 positions are modified to phosphoserine: Ser136, Ser151, and Ser159. The tract at residues 137-243 is PBC-B; sequence AAAAAAAAAS…VMILRSRFLD (107 aa). The segment at residues 244–306 is a DNA-binding region (homeobox; TALE-type); that stretch reads ARRKRRNFSK…NKRIRYKKNI (63 aa). 2 disordered regions span residues 327 to 347 and 375 to 430; these read GGHS…GGSF and LRHS…DTSN. Ser330 and Ser395 each carry phosphoserine. Polar residues predominate over residues 409–418; sequence VTPSSVTSPT.

Belongs to the TALE/PBX homeobox family. In terms of assembly, forms heterodimers with MEIS1 and heterotrimers with MEIS1 and HOXA9. Interacts with PBXIP1.

It localises to the nucleus. Functionally, transcriptional activator that binds the sequence 5'-ATCAATCAA-3'. Activates transcription of PF4 in complex with MEIS1. This is Pre-B-cell leukemia transcription factor 2 (Pbx2) from Mus musculus (Mouse).